The primary structure comprises 160 residues: Protein-export protein SecB (160 aa).

It belongs to the SecB family. In terms of assembly, homotetramer, a dimer of dimers. One homotetramer interacts with 1 SecA dimer.

Its subcellular location is the cytoplasm. In terms of biological role, one of the proteins required for the normal export of preproteins out of the cell cytoplasm. It is a molecular chaperone that binds to a subset of precursor proteins, maintaining them in a translocation-competent state. It also specifically binds to its receptor SecA. The chain is Protein-export protein SecB from Rhizobium johnstonii (strain DSM 114642 / LMG 32736 / 3841) (Rhizobium leguminosarum bv. viciae).